Reading from the N-terminus, the 320-residue chain is Bifunctional phosphoglucose/phosphomannose isomerase (320 aa).

One can recognise an SIS domain in the interval 20–153 (IAKDLTPYKG…NLLGVDKDEL (134 aa)). The D-fructose 6-phosphate site is built by glycine 37, serine 38, serine 80, serine 82, threonine 85, and arginine 132. Glutamate 204 acts as the Proton acceptor in catalysis. Histidine 220 and lysine 313 together coordinate D-fructose 6-phosphate. Histidine 220 functions as the Proton donor in the catalytic mechanism. Residue lysine 313 is the Proton acceptor of the active site.

It belongs to the PGI/PMI family. Homodimer.

It catalyses the reaction alpha-D-glucose 6-phosphate = beta-D-fructose 6-phosphate. The enzyme catalyses D-mannose 6-phosphate = D-fructose 6-phosphate. Functionally, dual specificity isomerase that catalyzes the isomerization of both glucose-6-phosphate and mannose-6-phosphate to fructose-6-phosphate. This is Bifunctional phosphoglucose/phosphomannose isomerase from Aquifex aeolicus (strain VF5).